Consider the following 429-residue polypeptide: Enolase (429 aa).

Q163 serves as a coordination point for (2R)-2-phosphoglycerate. Catalysis depends on E205, which acts as the Proton donor. The Mg(2+) site is built by D242, E285, and D312. Residues K337, R366, S367, and K388 each coordinate (2R)-2-phosphoglycerate. The active-site Proton acceptor is K337.

The protein belongs to the enolase family. Mg(2+) is required as a cofactor.

Its subcellular location is the cytoplasm. The protein localises to the secreted. The protein resides in the cell surface. The enzyme catalyses (2R)-2-phosphoglycerate = phosphoenolpyruvate + H2O. The protein operates within carbohydrate degradation; glycolysis; pyruvate from D-glyceraldehyde 3-phosphate: step 4/5. In terms of biological role, catalyzes the reversible conversion of 2-phosphoglycerate (2-PG) into phosphoenolpyruvate (PEP). It is essential for the degradation of carbohydrates via glycolysis. In Methylorubrum populi (strain ATCC BAA-705 / NCIMB 13946 / BJ001) (Methylobacterium populi), this protein is Enolase.